The sequence spans 706 residues: Elongation factor G (706 aa).

Residues 12 to 288 (EKTRNIGIMA…GVTNYLPSPN (277 aa)) form the tr-type G domain. GTP-binding positions include 21 to 28 (AHIDAGKT), 85 to 89 (DTPGH), and 139 to 142 (NKMD). Residues 288–309 (NDVPAITGHHPQDKEEDITRHP) are disordered. The segment covering 297-309 (HPQDKEEDITRHP) has biased composition (basic and acidic residues).

Belongs to the TRAFAC class translation factor GTPase superfamily. Classic translation factor GTPase family. EF-G/EF-2 subfamily.

It localises to the cytoplasm. In terms of biological role, catalyzes the GTP-dependent ribosomal translocation step during translation elongation. During this step, the ribosome changes from the pre-translocational (PRE) to the post-translocational (POST) state as the newly formed A-site-bound peptidyl-tRNA and P-site-bound deacylated tRNA move to the P and E sites, respectively. Catalyzes the coordinated movement of the two tRNA molecules, the mRNA and conformational changes in the ribosome. The chain is Elongation factor G from Salinibacter ruber (strain DSM 13855 / M31).